The chain runs to 353 residues: tRNA N6-adenosine threonylcarbamoyltransferase (353 aa).

The Fe cation site is built by His111 and His115. Substrate contacts are provided by residues Leu134 to Gly138, Asp167, Gly180, Asp184, and Asn279. Asp307 is a binding site for Fe cation.

This sequence belongs to the KAE1 / TsaD family. It depends on Fe(2+) as a cofactor.

The protein resides in the cytoplasm. The enzyme catalyses L-threonylcarbamoyladenylate + adenosine(37) in tRNA = N(6)-L-threonylcarbamoyladenosine(37) in tRNA + AMP + H(+). Required for the formation of a threonylcarbamoyl group on adenosine at position 37 (t(6)A37) in tRNAs that read codons beginning with adenine. Is involved in the transfer of the threonylcarbamoyl moiety of threonylcarbamoyl-AMP (TC-AMP) to the N6 group of A37, together with TsaE and TsaB. TsaD likely plays a direct catalytic role in this reaction. The protein is tRNA N6-adenosine threonylcarbamoyltransferase of Thermosynechococcus vestitus (strain NIES-2133 / IAM M-273 / BP-1).